Consider the following 157-residue polypeptide: MKESILAVLLYLFEYYFSENADLVRDRDSLQNSLIQVGFSPAEINKAFEWLDALAANRPTLTNPRVNGPVRVLHGPELDKLDVESRGFLLFLEQQGILNTEQRELVLDRAMALDQEELDLDDMKWVVLMVLFNQPGAEAAYAWMETQMFGNEPEQLH.

It belongs to the Smg family.

The polypeptide is Protein Smg homolog (Xylella fastidiosa (strain M23)).